The primary structure comprises 298 residues: Acetylglutamate kinase (298 aa).

Residues 69 to 70, R91, and N196 contribute to the substrate site; that span reads GG.

This sequence belongs to the acetylglutamate kinase family. ArgB subfamily.

It is found in the cytoplasm. The enzyme catalyses N-acetyl-L-glutamate + ATP = N-acetyl-L-glutamyl 5-phosphate + ADP. The protein operates within amino-acid biosynthesis; L-arginine biosynthesis; N(2)-acetyl-L-ornithine from L-glutamate: step 2/4. Its function is as follows. Catalyzes the ATP-dependent phosphorylation of N-acetyl-L-glutamate. The chain is Acetylglutamate kinase from Rhodopseudomonas palustris (strain BisA53).